We begin with the raw amino-acid sequence, 260 residues long: Putative [LysW]-aminoadipate/[LysW]-glutamate kinase (260 aa).

Substrate-binding positions include 35–36 (GG), Arg-62, and Asn-162.

This sequence belongs to the acetylglutamate kinase family. LysZ subfamily.

Its subcellular location is the cytoplasm. The enzyme catalyses [amino-group carrier protein]-C-terminal-N-(1,4-dicarboxybutan-1-yl)-L-glutamine + ATP = [amino-group carrier protein]-C-terminal-N-(1-carboxy-5-phosphooxy-5-oxopentan-1-yl)-L-glutamine + ADP. It catalyses the reaction [amino-group carrier protein]-C-terminal-gamma-(L-glutamyl)-L-glutamate + ATP = [amino-group carrier protein]-C-terminal-gamma-(5-phospho-L-glutamyl)-L-glutamate + ADP. Its pathway is amino-acid biosynthesis; L-lysine biosynthesis via AAA pathway; L-lysine from L-alpha-aminoadipate (Thermus route): step 2/5. It functions in the pathway amino-acid biosynthesis; L-arginine biosynthesis. Its function is as follows. Involved in both the arginine and lysine biosynthetic pathways. Phosphorylates the LysW-bound precursors glutamate (for arginine biosynthesis), respectively alpha-aminoadipate (for lysine biosynthesis). The polypeptide is Putative [LysW]-aminoadipate/[LysW]-glutamate kinase (Pyrobaculum neutrophilum (strain DSM 2338 / JCM 9278 / NBRC 100436 / V24Sta) (Thermoproteus neutrophilus)).